A 201-amino-acid polypeptide reads, in one-letter code: dITP/XTP pyrophosphatase (201 aa).

Residue 8 to 13 coordinates substrate; it reads SNNPGK. Positions 40 and 69 each coordinate Mg(2+). Asp69 serves as the catalytic Proton acceptor. Residues Ser70, 155–158, Lys178, and 183–184 each bind substrate; these read FGYD and HR.

The protein belongs to the HAM1 NTPase family. As to quaternary structure, homodimer. Requires Mg(2+) as cofactor.

It catalyses the reaction XTP + H2O = XMP + diphosphate + H(+). It carries out the reaction dITP + H2O = dIMP + diphosphate + H(+). The enzyme catalyses ITP + H2O = IMP + diphosphate + H(+). Its function is as follows. Pyrophosphatase that catalyzes the hydrolysis of nucleoside triphosphates to their monophosphate derivatives, with a high preference for the non-canonical purine nucleotides XTP (xanthosine triphosphate), dITP (deoxyinosine triphosphate) and ITP. Seems to function as a house-cleaning enzyme that removes non-canonical purine nucleotides from the nucleotide pool, thus preventing their incorporation into DNA/RNA and avoiding chromosomal lesions. This is dITP/XTP pyrophosphatase from Ralstonia nicotianae (strain ATCC BAA-1114 / GMI1000) (Ralstonia solanacearum).